A 207-amino-acid polypeptide reads, in one-letter code: Thiamine-phosphate synthase (207 aa).

Residues 36 to 40 and aspartate 68 each bind 4-amino-2-methyl-5-(diphosphooxymethyl)pyrimidine; that span reads QLRIK. Positions 69 and 88 each coordinate Mg(2+). Residue serine 106 participates in 4-amino-2-methyl-5-(diphosphooxymethyl)pyrimidine binding. Residue 132–134 participates in 2-[(2R,5Z)-2-carboxy-4-methylthiazol-5(2H)-ylidene]ethyl phosphate binding; it reads TKT. Residue lysine 135 participates in 4-amino-2-methyl-5-(diphosphooxymethyl)pyrimidine binding. 2-[(2R,5Z)-2-carboxy-4-methylthiazol-5(2H)-ylidene]ethyl phosphate is bound by residues glycine 162 and 182–183; that span reads VS.

Belongs to the thiamine-phosphate synthase family. The cofactor is Mg(2+).

It carries out the reaction 2-[(2R,5Z)-2-carboxy-4-methylthiazol-5(2H)-ylidene]ethyl phosphate + 4-amino-2-methyl-5-(diphosphooxymethyl)pyrimidine + 2 H(+) = thiamine phosphate + CO2 + diphosphate. The enzyme catalyses 2-(2-carboxy-4-methylthiazol-5-yl)ethyl phosphate + 4-amino-2-methyl-5-(diphosphooxymethyl)pyrimidine + 2 H(+) = thiamine phosphate + CO2 + diphosphate. The catalysed reaction is 4-methyl-5-(2-phosphooxyethyl)-thiazole + 4-amino-2-methyl-5-(diphosphooxymethyl)pyrimidine + H(+) = thiamine phosphate + diphosphate. Its pathway is cofactor biosynthesis; thiamine diphosphate biosynthesis; thiamine phosphate from 4-amino-2-methyl-5-diphosphomethylpyrimidine and 4-methyl-5-(2-phosphoethyl)-thiazole: step 1/1. Condenses 4-methyl-5-(beta-hydroxyethyl)thiazole monophosphate (THZ-P) and 2-methyl-4-amino-5-hydroxymethyl pyrimidine pyrophosphate (HMP-PP) to form thiamine monophosphate (TMP). The protein is Thiamine-phosphate synthase of Pyrococcus abyssi (strain GE5 / Orsay).